A 284-amino-acid chain; its full sequence is D-tagatose-1,6-bisphosphate aldolase subunit GatY (284 aa).

Asp82 serves as the catalytic Proton donor. Residues His83 and His180 each contribute to the Zn(2+) site. A dihydroxyacetone phosphate-binding site is contributed by Gly181. His208 is a Zn(2+) binding site. Dihydroxyacetone phosphate-binding positions include 209 to 211 (GAS) and 230 to 233 (NVAT).

The protein belongs to the class II fructose-bisphosphate aldolase family. TagBP aldolase GatY subfamily. As to quaternary structure, forms a complex with GatZ. Zn(2+) is required as a cofactor.

The catalysed reaction is D-tagatofuranose 1,6-bisphosphate = D-glyceraldehyde 3-phosphate + dihydroxyacetone phosphate. Its pathway is carbohydrate metabolism; D-tagatose 6-phosphate degradation; D-glyceraldehyde 3-phosphate and glycerone phosphate from D-tagatose 6-phosphate: step 2/2. Functionally, catalytic subunit of the tagatose-1,6-bisphosphate aldolase GatYZ, which catalyzes the reversible aldol condensation of dihydroxyacetone phosphate (DHAP or glycerone-phosphate) with glyceraldehyde 3-phosphate (G3P) to produce tagatose 1,6-bisphosphate (TBP). Requires GatZ subunit for full activity and stability. Is involved in the catabolism of galactitol. This chain is D-tagatose-1,6-bisphosphate aldolase subunit GatY, found in Escherichia coli O139:H28 (strain E24377A / ETEC).